We begin with the raw amino-acid sequence, 1465 residues long: Ankyrin and armadillo repeat-containing protein (1465 aa).

Residues 313-329 form a helical membrane-spanning segment; sequence MGYLKLICFLIPFLLSL. ANK repeat units lie at residues 532–561, 582–611, 615–644, 651–680, and 684–714; these read AGYA…NVNQ, NGPT…DYTL, RGWM…SLLE, NQCT…NWRK, and KGNN…ELPV. ARM repeat units lie at residues 745–784, 786–825, 827–865, 868–907, 910–949, and 1085–1125; these read DRYW…NIST, VSIV…DVAK, ENKD…VLCM, ESNQ…EVAR, KEVQ…SLAN, and PMSQ…CIVL. Residues 1431 to 1465 are disordered; it reads KLGKDEQKANPDPPAFLNKLGKDEQNANPDPAESQ.

It is found in the membrane. The polypeptide is Ankyrin and armadillo repeat-containing protein (Ankar) (Mus musculus (Mouse)).